The primary structure comprises 157 residues: Sorting nexin-3 (157 aa).

The interval 1-21 (MSKPFQPISDVINTSPKNKSQ) is disordered. The span at 11 to 21 (VINTSPKNKSQ) shows a compositional bias: polar residues. A PX domain is found at 32–152 (NFLEIEVKNP…EFIQNEKWDP (121 aa)). The a 1,2-diacyl-sn-glycero-3-phospho-(1D-myo-inositol-3-phosphate) site is built by Arg-75, Ser-77, Lys-101, and Arg-117.

This sequence belongs to the sorting nexin family.

It localises to the cytoplasm. The protein resides in the golgi apparatus membrane. It is found in the prevacuolar compartment membrane. Required for retention of late Golgi membrane proteins. Component of the retrieval machinery that functions by direct interaction with the cytosolic tails of certain TGN membrane proteins during the sorting/budding process at the prevacuolar compartment. Binds phosphatidylinositol 3-phosphate (PtdIns(P3)). This Candida albicans (strain SC5314 / ATCC MYA-2876) (Yeast) protein is Sorting nexin-3 (SNX3).